Consider the following 313-residue polypeptide: Acetyl-coenzyme A carboxylase carboxyl transferase subunit beta (313 aa).

The CoA carboxyltransferase N-terminal domain maps to 24–293 (LWIKCPDSGQ…LETASKSVQP (270 aa)).

Belongs to the AccD/PCCB family. In terms of assembly, acetyl-CoA carboxylase is a heterohexamer composed of biotin carboxyl carrier protein (AccB), biotin carboxylase (AccC) and two subunits each of ACCase subunit alpha (AccA) and ACCase subunit beta (AccD).

The protein localises to the cytoplasm. It catalyses the reaction N(6)-carboxybiotinyl-L-lysyl-[protein] + acetyl-CoA = N(6)-biotinyl-L-lysyl-[protein] + malonyl-CoA. It participates in lipid metabolism; malonyl-CoA biosynthesis; malonyl-CoA from acetyl-CoA: step 1/1. Component of the acetyl coenzyme A carboxylase (ACC) complex. Biotin carboxylase (BC) catalyzes the carboxylation of biotin on its carrier protein (BCCP) and then the CO(2) group is transferred by the transcarboxylase to acetyl-CoA to form malonyl-CoA. This chain is Acetyl-coenzyme A carboxylase carboxyl transferase subunit beta, found in Bradyrhizobium diazoefficiens (strain JCM 10833 / BCRC 13528 / IAM 13628 / NBRC 14792 / USDA 110).